We begin with the raw amino-acid sequence, 347 residues long: Protein RecA (347 aa).

67–74 (GPESSGKT) lines the ATP pocket.

Belongs to the RecA family.

It localises to the cytoplasm. Functionally, can catalyze the hydrolysis of ATP in the presence of single-stranded DNA, the ATP-dependent uptake of single-stranded DNA by duplex DNA, and the ATP-dependent hybridization of homologous single-stranded DNAs. It interacts with LexA causing its activation and leading to its autocatalytic cleavage. This chain is Protein RecA, found in Helicobacter acinonychis (strain Sheeba).